Here is a 1062-residue protein sequence, read N- to C-terminus: Valine--tRNA ligase, mitochondrial (1062 aa).

A mitochondrion-targeting transit peptide spans 1–15 (MPHLPLASFRPPLRG). The interval 1–73 (MPHLPLASFR…AKGKPPAEST (73 aa)) is disordered. The segment covering 42-56 (RNREAKQKRLREKQA) has biased composition (basic and acidic residues). The 'HIGH' region motif lies at 146-156 (PNVTGSLHIGH). A 'KMSKS' region motif is present at residues 659–663 (KMSKS). An ATP-binding site is contributed by K662.

Belongs to the class-I aminoacyl-tRNA synthetase family.

The protein resides in the mitochondrion. The enzyme catalyses tRNA(Val) + L-valine + ATP = L-valyl-tRNA(Val) + AMP + diphosphate. Functionally, catalyzes the attachment of valine to tRNA(Val) in a two-step reaction: valine is first activated by ATP to form Val-AMP and then transferred to the acceptor end of tRNA(Val). In Sus scrofa (Pig), this protein is Valine--tRNA ligase, mitochondrial (VARS2).